We begin with the raw amino-acid sequence, 124 residues long: Small ribosomal subunit protein uS12 (124 aa).

Aspartate 89 bears the 3-methylthioaspartic acid mark. A disordered region spans residues 105-124; that stretch reads QGVKNRGQARSRYGAKKEKK. Over residues 111 to 124 the composition is skewed to basic residues; the sequence is GQARSRYGAKKEKK.

The protein belongs to the universal ribosomal protein uS12 family. In terms of assembly, part of the 30S ribosomal subunit. Contacts proteins S8 and S17. May interact with IF1 in the 30S initiation complex.

Functionally, with S4 and S5 plays an important role in translational accuracy. In terms of biological role, interacts with and stabilizes bases of the 16S rRNA that are involved in tRNA selection in the A site and with the mRNA backbone. Located at the interface of the 30S and 50S subunits, it traverses the body of the 30S subunit contacting proteins on the other side and probably holding the rRNA structure together. The combined cluster of proteins S8, S12 and S17 appears to hold together the shoulder and platform of the 30S subunit. The chain is Small ribosomal subunit protein uS12 from Micrococcus luteus (Micrococcus lysodeikticus).